Reading from the N-terminus, the 440-residue chain is Protein disulfide-isomerase A6 (440 aa).

The signal sequence occupies residues 1 to 19 (MARLVLGLVSCTFFLAVSG). Thioredoxin domains are found at residues 20–133 (LYSS…ALRQ) and 151–287 (QGRG…EDIA). Cys55 and Cys58 are oxidised to a cystine. A phosphoserine mark is found at Ser129, Ser156, and Ser158. Residues 139–161 (LGGRSGGYSSGKQGRGDSSSKKD) are disordered. Residues 152 to 161 (GRGDSSSKKD) show a composition bias toward basic and acidic residues. The cysteines at positions 190 and 193 are disulfide-linked. The disordered stretch occupies residues 399–440 (GGGSFPTITPREPWDGKDGELPVEDDIDLSDVELDDLEKDEL). Over residues 419–440 (LPVEDDIDLSDVELDDLEKDEL) the composition is skewed to acidic residues. Ser428 bears the Phosphoserine mark. Residues 437–440 (KDEL) carry the Prevents secretion from ER motif.

This sequence belongs to the protein disulfide isomerase family. Part of a large chaperone multiprotein complex comprising DNAJB11, HSP90B1, HSPA5, HYOU, PDIA2, PDIA4, PDIA6, PPIB, SDF2L1, UGGT1 and very small amounts of ERP29, but not, or at very low levels, CALR nor CANX. Interacts with MICA on the surface of tumor cells, leading to MICA disulfide bond reduction which is required for its release from tumor cells. Interacts with ITGB3 following platelet stimulation. Interacts with ERN1; the interaction is direct. Interacts with EIF2AK3.

The protein resides in the endoplasmic reticulum lumen. It localises to the cell membrane. It is found in the melanosome. It catalyses the reaction Catalyzes the rearrangement of -S-S- bonds in proteins.. Its function is as follows. May function as a chaperone that inhibits aggregation of misfolded proteins. Negatively regulates the unfolded protein response (UPR) through binding to UPR sensors such as ERN1, which in turn inactivates ERN1 signaling. May also regulate the UPR via the EIF2AK3 UPR sensor. Plays a role in platelet aggregation and activation by agonists such as convulxin, collagen and thrombin. This is Protein disulfide-isomerase A6 (Pdia6) from Mus musculus (Mouse).